We begin with the raw amino-acid sequence, 318 residues long: Protein OPG137 (318 aa).

Residues 145 to 172 adopt a coiled-coil conformation; sequence VYDKDKRIQMLEDEVVNLRNQRSNTKSS.

This sequence belongs to the orthopoxvirus OPG137 family. In terms of assembly, homomultimer. Interacts with OPG160. Phosphorylated by a OPG054-independent mechanism.

Its subcellular location is the host cytoplasm. Functionally, required for viral crescent formation early during virus morphogenesis. This Vaccinia virus (strain Ankara) (VACV) protein is Protein OPG137 (OPG137).